The following is a 264-amino-acid chain: MSPARNDKPFTLAGRTYASRLLVGTGKYKDLEETRQAIEASGAEIVTVAVRRTNIGQNPGEPNLLDVINPARYTILPNTAGCYTAEEAVRTCRLARELLDGHKLVKLEVLADQKTLFPNVIETLKAAEVLVKDGFDVMVYTSDDPIIARQLAEMGCIAVMPLAGLIGTGLGICNPYNLRIILEEATVPVLVDAGVGTASDATIAMELGCEAVLMNSAIAHAQDPVLMARAMKHAIEAGRLAWLAGRMPKKLYASASSPLEGLIR.

Lys106 functions as the Schiff-base intermediate with DXP in the catalytic mechanism. Residues Gly167, 193 to 194, and 215 to 216 each bind 1-deoxy-D-xylulose 5-phosphate; these read AG and NS.

The protein belongs to the ThiG family. In terms of assembly, homotetramer. Forms heterodimers with either ThiH or ThiS.

It localises to the cytoplasm. It carries out the reaction [ThiS sulfur-carrier protein]-C-terminal-Gly-aminoethanethioate + 2-iminoacetate + 1-deoxy-D-xylulose 5-phosphate = [ThiS sulfur-carrier protein]-C-terminal Gly-Gly + 2-[(2R,5Z)-2-carboxy-4-methylthiazol-5(2H)-ylidene]ethyl phosphate + 2 H2O + H(+). The protein operates within cofactor biosynthesis; thiamine diphosphate biosynthesis. Functionally, catalyzes the rearrangement of 1-deoxy-D-xylulose 5-phosphate (DXP) to produce the thiazole phosphate moiety of thiamine. Sulfur is provided by the thiocarboxylate moiety of the carrier protein ThiS. In vitro, sulfur can be provided by H(2)S. The protein is Thiazole synthase of Azotobacter vinelandii (strain DJ / ATCC BAA-1303).